Here is a 1380-residue protein sequence, read N- to C-terminus: MVQQTFTGRKRVRKFFGHIREVAEMPNLIEVQKASYDQFLMVDEPEGGRLDEGLQAVFKSVFPINDFSGTSQLEFVRYEFEAPKYDVDECRQRGMTYAAPLKVTLRLIVFDIDEETAAKSVKDIKEQDVYMGDIPLMTMNGTFVVNGTERVIVSQMHRSPGVFFDHDKGKTHSSGKLLFAARVIPYRGSWLDIEFDAKDIVFARIDRRRKIPVTSLMFALGLDGEEILSTFYKKIIYKRAKSGSNADGWRVPYDPVRFRGYSTLNDLIDADSGKVVLEAGKKLTVRAARQLQEKGLKALRMSDEELVGMYLAEDLVNPKTGEIYAEAGEEITEKSLKALNEHGYKELPLLDIDHVNVGPYIRNTLSADKNLTREDALFDIYRVMRPGEPPTLESAQNMFQSLFFDSERYDLSAVGRVKMNMRLDLDAPDTYRTLRKEDILAVIKTLVDLRDGKGEIDDIDHLGNRRVRSVGELMENQYRVGLLRMERAIKERMSSVDIDTVMPQDLINAKPAAAAVREFFGSSQLSQFMDQTNPLSEITHKRRLSALGPGGLTRERAGFEVRDVHPTHYGRICPIETPEGPNIGLINSLATFARVNKYGFVETPYRKVKDGRVTDEVVYLSAMEEGRYHVAQANLPLDNRGRFTEDLVVCRHAGEVLPVTSDKVDFMDVSPKQLVSVAAALIPFLENDDANRALMGSNMQRQAVPLVRAEAPFVGTGMEGVVARDSGAAIAARRSGIIDQIDATRVVIRATEDLDPTKSGVDIYRLMKYQRSNQSTCINQRPLVKVGDVVKKGDIIADGPSTDLGELALGRNVLVAFMPWNGYNFEDSILLSERIVKEDVFTSIHIEEFEVMARDTKLGPEEITRDIPNVSEEALKNLDEAGIVYIGAEVRAGDILVGKITPKGESPMTPEEKLLRAIFGEKASDVRDTSLRVPPGVQGTIVEVRVFNRHGVDKDERALAIEREEIERLAKDRDDEQAILDRNVYGRLADLLENRQGIAGPKGFKKDTKITRSVIEEYPKSQWWLFASPNDKLMAEIEAMRKQYDESKKGLEQRFLDKVEKLQRGDELPPGVMKMVKVFVAVKRKIQPGDKMAGRHGNKGVVSKIVPIEDMPFLEDGTHADIVLNPLGVPSRMNVGQILETHLGWACAGLGRRIGQAVDAYLASAKQETKPLKETLKKVYGDNETIKSLNDHELVELGRNLSRGVPIATPVFDGAKEADIEQMLELAGMDKSGQSTVYDGRTGDTFDRKVTVGYIYMLKLHHLVDDKIHARSIGPYSLVTQQPLGGKAQFGGQRFGEMEVWALEAYGAAYTLQEMLTVKSDDVAGRTKVYEAIVRGDDTFEAGIPESFNVLVKEMRSLGLNVDLHNSKIGSATPTSEAAE.

The protein belongs to the RNA polymerase beta chain family. As to quaternary structure, the RNAP catalytic core consists of 2 alpha, 1 beta, 1 beta' and 1 omega subunit. When a sigma factor is associated with the core the holoenzyme is formed, which can initiate transcription.

The catalysed reaction is RNA(n) + a ribonucleoside 5'-triphosphate = RNA(n+1) + diphosphate. Its function is as follows. DNA-dependent RNA polymerase catalyzes the transcription of DNA into RNA using the four ribonucleoside triphosphates as substrates. This chain is DNA-directed RNA polymerase subunit beta, found in Nitrobacter hamburgensis (strain DSM 10229 / NCIMB 13809 / X14).